A 188-amino-acid chain; its full sequence is Elongation factor P (188 aa).

The protein belongs to the elongation factor P family.

It localises to the cytoplasm. The protein operates within protein biosynthesis; polypeptide chain elongation. Its function is as follows. Involved in peptide bond synthesis. Stimulates efficient translation and peptide-bond synthesis on native or reconstituted 70S ribosomes in vitro. Probably functions indirectly by altering the affinity of the ribosome for aminoacyl-tRNA, thus increasing their reactivity as acceptors for peptidyl transferase. In Natranaerobius thermophilus (strain ATCC BAA-1301 / DSM 18059 / JW/NM-WN-LF), this protein is Elongation factor P.